The sequence spans 314 residues: tRNA(Ile)-lysidine synthase (314 aa).

37 to 42 (SGGPDS) lines the ATP pocket.

This sequence belongs to the tRNA(Ile)-lysidine synthase family.

Its subcellular location is the cytoplasm. It carries out the reaction cytidine(34) in tRNA(Ile2) + L-lysine + ATP = lysidine(34) in tRNA(Ile2) + AMP + diphosphate + H(+). Functionally, ligates lysine onto the cytidine present at position 34 of the AUA codon-specific tRNA(Ile) that contains the anticodon CAU, in an ATP-dependent manner. Cytidine is converted to lysidine, thus changing the amino acid specificity of the tRNA from methionine to isoleucine. The polypeptide is tRNA(Ile)-lysidine synthase (Corynebacterium glutamicum (strain ATCC 13032 / DSM 20300 / JCM 1318 / BCRC 11384 / CCUG 27702 / LMG 3730 / NBRC 12168 / NCIMB 10025 / NRRL B-2784 / 534)).